The chain runs to 199 residues: MEQQETIHISISEAAQTHFRRLLEQQEENTNIRIFVVNPGTPNAECGVSYCPPNAVEETDTQFEYNGFSAFVDEISLPFLDEAEIDYVTDPMGSQLTLKAPNAKMRKVADDAPFIERLDYVIQTQVNPQLASHGGRVTLIEVTEDKYAILQFGGGCNGCSMVDVTLKEGIEKQLLAMFPDELAGVKDVTEHQRGEHSYY.

[4Fe-4S] cluster-binding residues include cysteine 156 and cysteine 159.

The protein belongs to the NfuA family. As to quaternary structure, homodimer. [4Fe-4S] cluster is required as a cofactor.

Involved in iron-sulfur cluster biogenesis. Binds a 4Fe-4S cluster, can transfer this cluster to apoproteins, and thereby intervenes in the maturation of Fe/S proteins. Could also act as a scaffold/chaperone for damaged Fe/S proteins. This Actinobacillus pleuropneumoniae serotype 5b (strain L20) protein is Fe/S biogenesis protein NfuA.